A 330-amino-acid chain; its full sequence is DNA-directed RNA polymerase subunit alpha (330 aa).

The alpha N-terminal domain (alpha-NTD) stretch occupies residues 1-225; sequence MSDLAIPTIS…KQFAALVSHN (225 aa). The tract at residues 237 to 330 is alpha C-terminal domain (alpha-CTD); sequence VKYAIPEEKY…KKKNKGMDEA (94 aa).

The protein belongs to the RNA polymerase alpha chain family. As to quaternary structure, homodimer. The RNAP catalytic core consists of 2 alpha, 1 beta, 1 beta' and 1 omega subunit. When a sigma factor is associated with the core the holoenzyme is formed, which can initiate transcription.

The catalysed reaction is RNA(n) + a ribonucleoside 5'-triphosphate = RNA(n+1) + diphosphate. In terms of biological role, DNA-dependent RNA polymerase catalyzes the transcription of DNA into RNA using the four ribonucleoside triphosphates as substrates. The protein is DNA-directed RNA polymerase subunit alpha of Dehalococcoides mccartyi (strain ATCC BAA-2266 / KCTC 15142 / 195) (Dehalococcoides ethenogenes (strain 195)).